Reading from the N-terminus, the 399-residue chain is Na(+)/H(+) antiporter NhaA (399 aa).

11 helical membrane-spanning segments follow: residues 12–32 (LDIA…IAAN), 60–80 (LLLW…GLEI), 94–114 (LAAL…LIYA), 126–146 (GWAI…TLLG), 155–175 (IFLT…IAFF), 178–198 (ASLS…LIGL), 206–226 (LWPY…SGVH), 263–283 (PWVT…VSLA), 284–304 (GLPP…GLFL), 336–356 (GVAL…TLAF), and 372–392 (LGVL…LRLS).

It belongs to the NhaA Na(+)/H(+) (TC 2.A.33) antiporter family.

The protein localises to the cell inner membrane. The catalysed reaction is Na(+)(in) + 2 H(+)(out) = Na(+)(out) + 2 H(+)(in). Functionally, na(+)/H(+) antiporter that extrudes sodium in exchange for external protons. In Rhodospirillum rubrum (strain ATCC 11170 / ATH 1.1.1 / DSM 467 / LMG 4362 / NCIMB 8255 / S1), this protein is Na(+)/H(+) antiporter NhaA.